Reading from the N-terminus, the 416-residue chain is Creatine kinase U-type, mitochondrial (416 aa).

Residues 1–39 constitute a mitochondrion transit peptide; the sequence is MAGPFSRLLSARPGLRLLALAGAGSLAAGFLLRSEPVRA. Positions 40-64 are cardiolipin-binding; it reads ASERRRLYPPSAEYPDLRKHNNCMA. A Phosphagen kinase N-terminal domain is found at 45-131; that stretch reads RLYPPSAEYP…FDPVIQERHN (87 aa). At Ser-151 the chain carries Phosphoserine. A Phosphagen kinase C-terminal domain is found at 158–400; that stretch reads YVLSSRVRTG…NFLIDCERRL (243 aa). Position 161–165 (161–165) interacts with ATP; the sequence is SSRVR. Position 196 is a phosphoserine (Ser-196). Thr-213 carries the post-translational modification Phosphothreonine. His-224 is a binding site for ATP. Ser-232 bears the Phosphoserine mark. Residues Arg-269, Arg-325, and 353-358 each bind ATP; that span reads RGTGGV. Thr-355 is modified (phosphothreonine). Ser-365 bears the Phosphoserine mark. Asp-368 lines the ATP pocket.

This sequence belongs to the ATP:guanido phosphotransferase family. As to quaternary structure, exists as an octamer composed of four MTCK homodimers.

Its subcellular location is the mitochondrion inner membrane. It carries out the reaction creatine + ATP = N-phosphocreatine + ADP + H(+). Its function is as follows. Reversibly catalyzes the transfer of phosphate between ATP and various phosphogens (e.g. creatine phosphate). Creatine kinase isoenzymes play a central role in energy transduction in tissues with large, fluctuating energy demands, such as skeletal muscle, heart, brain and spermatozoa. The protein is Creatine kinase U-type, mitochondrial (CKMT1) of Bos taurus (Bovine).